We begin with the raw amino-acid sequence, 220 residues long: Ribosomal RNA large subunit methyltransferase E (220 aa).

Gly60, Trp62, Asp92, Asp108, and Asp133 together coordinate S-adenosyl-L-methionine. Catalysis depends on Lys173, which acts as the Proton acceptor.

Belongs to the class I-like SAM-binding methyltransferase superfamily. RNA methyltransferase RlmE family.

Its subcellular location is the cytoplasm. The enzyme catalyses uridine(2552) in 23S rRNA + S-adenosyl-L-methionine = 2'-O-methyluridine(2552) in 23S rRNA + S-adenosyl-L-homocysteine + H(+). In terms of biological role, specifically methylates the uridine in position 2552 of 23S rRNA at the 2'-O position of the ribose in the fully assembled 50S ribosomal subunit. The chain is Ribosomal RNA large subunit methyltransferase E from Paraburkholderia phytofirmans (strain DSM 17436 / LMG 22146 / PsJN) (Burkholderia phytofirmans).